The following is a 236-amino-acid chain: Ubiquinone biosynthesis O-methyltransferase (236 aa).

R36, G56, D77, and M125 together coordinate S-adenosyl-L-methionine.

It belongs to the methyltransferase superfamily. UbiG/COQ3 family.

It catalyses the reaction a 3-demethylubiquinol + S-adenosyl-L-methionine = a ubiquinol + S-adenosyl-L-homocysteine + H(+). The enzyme catalyses a 3-(all-trans-polyprenyl)benzene-1,2-diol + S-adenosyl-L-methionine = a 2-methoxy-6-(all-trans-polyprenyl)phenol + S-adenosyl-L-homocysteine + H(+). It participates in cofactor biosynthesis; ubiquinone biosynthesis. In terms of biological role, O-methyltransferase that catalyzes the 2 O-methylation steps in the ubiquinone biosynthetic pathway. The protein is Ubiquinone biosynthesis O-methyltransferase of Haemophilus ducreyi (strain 35000HP / ATCC 700724).